The primary structure comprises 359 residues: 3-dehydroquinate synthase (359 aa).

NAD(+) contacts are provided by residues 70–75, 104–108, 128–129, Lys-141, and Lys-150; these read DAEGGK, GAATD, and TT. Zn(2+)-binding residues include Glu-183, His-246, and His-262.

Belongs to the sugar phosphate cyclases superfamily. Dehydroquinate synthase family. The cofactor is Co(2+). Zn(2+) is required as a cofactor. NAD(+) serves as cofactor.

The protein localises to the cytoplasm. The catalysed reaction is 7-phospho-2-dehydro-3-deoxy-D-arabino-heptonate = 3-dehydroquinate + phosphate. It participates in metabolic intermediate biosynthesis; chorismate biosynthesis; chorismate from D-erythrose 4-phosphate and phosphoenolpyruvate: step 2/7. In terms of biological role, catalyzes the conversion of 3-deoxy-D-arabino-heptulosonate 7-phosphate (DAHP) to dehydroquinate (DHQ). The protein is 3-dehydroquinate synthase of Mycolicibacterium vanbaalenii (strain DSM 7251 / JCM 13017 / BCRC 16820 / KCTC 9966 / NRRL B-24157 / PYR-1) (Mycobacterium vanbaalenii).